We begin with the raw amino-acid sequence, 104 residues long: Large ribosomal subunit protein uL24 (104 aa).

This sequence belongs to the universal ribosomal protein uL24 family. As to quaternary structure, part of the 50S ribosomal subunit.

Its function is as follows. One of two assembly initiator proteins, it binds directly to the 5'-end of the 23S rRNA, where it nucleates assembly of the 50S subunit. In terms of biological role, one of the proteins that surrounds the polypeptide exit tunnel on the outside of the subunit. The sequence is that of Large ribosomal subunit protein uL24 from Pseudomonas aeruginosa (strain LESB58).